The chain runs to 478 residues: PRAME family member 11 (478 aa).

Residues 99–126 form an LRR 1; degenerate repeat; sequence RWKLQVLDLQDVCENFWMVWSEAMAHGC. Residues 181–205 form an LRR 2; degenerate repeat; it reads HLCCKKLKILGMPFRNIRSILKMVN. The stretch at 206–232 is one LRR 3; degenerate repeat; it reads LDCIQEVEVNCKWILPILTQFTPYLGH. The stretch at 233-268 is one LRR 4; degenerate repeat; sequence LRNLQKLVLSHMDVSRYVSPEQKKEIVTQFTTQFLK. LRR repeat units follow at residues 269–294, 295–326, 327–347, 351–378, and 379–403; these read LRCL…LSCL, KTSL…SQLK, TLDL…QILL, AATL…ALSR, and CFEL…LLSH.

This sequence belongs to the PRAME family.

This Homo sapiens (Human) protein is PRAME family member 11.